A 2298-amino-acid chain; its full sequence is Non-reducing polyketide synthase pgmA (2298 aa).

The tract at residues 8–333 (LFIFGDQTLD…IYNVLKQSPL (326 aa)) is N-terminal acylcarrier protein transacylase domain (SAT). The tract at residues 336–361 (YLSSKPAQSRQPVSNEGAPEPGNGRQ) is disordered. Over residues 340–349 (KPAQSRQPVS) the composition is skewed to polar residues. The Ketosynthase family 3 (KS3) domain maps to 360-798 (RQKLAIIGMS…GGNSALLVED (439 aa)). Catalysis depends on for beta-ketoacyl synthase activity residues C532, H667, and H714. The interval 901–1193 (VFAFTGQGAH…GMVKGVLGPQ (293 aa)) is acyl/malonyl transferases. S994 (for acyl/malonyl transferase activity) is an active-site residue. The segment at 1283–1415 (HRVVEETHDS…CVVRFRDRGL (133 aa)) is N-terminal hotdog fold. In terms of domain architecture, PKS/mFAS DH spans 1283 to 1589 (HRVVEETHDS…IQGVPRRVLK (307 aa)). The segment at 1294–1586 (KTRIVIEADI…QISIQGVPRR (293 aa)) is product template (PT) domainn. H1315 functions as the Proton acceptor; for dehydratase activity in the catalytic mechanism. The interval 1438–1589 (VTGETARFNR…IQGVPRRVLK (152 aa)) is C-terminal hotdog fold. The active-site Proton donor; for dehydratase activity is the D1502. The interval 1619–1642 (YPVANGHAQATPTSGPVNGEPRPS) is disordered. The region spanning 1641–1716 (PSRFPRALEI…SLRALLSEPE (76 aa)) is the Carrier 1 domain. The residue at position 1675 (S1675) is an O-(pantetheine 4'-phosphoryl)serine. Residues 1716–1762 (ERSTNGMPAASAKDTSRFDEIPPMNGHKTNGHVMNGHSNGSSNGLPD) are disordered. A compositionally biased stretch (polar residues) spans 1751 to 1760 (GHSNGSSNGL). Residues 1765 to 1840 (KVDFQRVLQI…DLKRYLFPQD (76 aa)) form the Carrier 2 domain. An O-(pantetheine 4'-phosphoryl)serine modification is found at S1799. The reductase (R) domain stretch occupies residues 1927-2178 (VTGASGSLGG…YWTPVEEVAG (252 aa)).

The protein operates within pigment biosynthesis. It participates in secondary metabolite biosynthesis. Functionally, non-reducing polyketide synthase; part of the gene cluster that mediates the biosynthesis of pleosporalin A, ascomycone A, as well as a third cryptic naphthoquinone derived pigment, all responsible for the coloration of conidia. The non-reducing polyketide synthase pgmA is responsible for the condensation of seven acetyl-CoA units to produce the cyclized heptaketide 3-acetonyl-1,6,8-trihydroxy-2-naphthaldehyde. The pathway begins with the biosynthesis of the cyclized heptaketide 3-acetonyl-1,6,8-trihydroxy-2-naphthaldehyde by the NR-PKS pgmA. The C-6 hydroxyl group is further methylated by the O-methyltransferase pgmB to yield fusarubinaldehyde which is in turn oxidized by the cytochrome P450 monooxygenase pgmC at C-9. The C-1 hydroxyl group is then methylated spontaneously. Although pgmE, pgmD and pgmH are essential for the production of pleosporalin A, it is not the case for the 2 other final products and it remains difficult to assign a specific function to each enzyme. PgmF and pgmG seem not to be involved in pigment biosynthesis although they were regulated by the cluster-specific transcription factor pgmR. In Aspergillus terreus (strain NIH 2624 / FGSC A1156), this protein is Non-reducing polyketide synthase pgmA.